A 238-amino-acid polypeptide reads, in one-letter code: Probable transcriptional regulatory protein Mmwyl1_2868 (238 aa).

This sequence belongs to the TACO1 family.

Its subcellular location is the cytoplasm. In Marinomonas sp. (strain MWYL1), this protein is Probable transcriptional regulatory protein Mmwyl1_2868.